Consider the following 178-residue polypeptide: Large ribosomal subunit protein uL6 (178 aa).

This sequence belongs to the universal ribosomal protein uL6 family. As to quaternary structure, part of the 50S ribosomal subunit.

This protein binds to the 23S rRNA, and is important in its secondary structure. It is located near the subunit interface in the base of the L7/L12 stalk, and near the tRNA binding site of the peptidyltransferase center. In Helicobacter pylori (strain P12), this protein is Large ribosomal subunit protein uL6.